The sequence spans 82 residues: Transcription elongation factor 1 homolog (82 aa).

Positions 26, 29, 50, and 53 each coordinate Zn(2+).

This sequence belongs to the ELOF1 family.

Its subcellular location is the nucleus. Transcription elongation factor implicated in the maintenance of proper chromatin structure in actively transcribed regions. In Manduca sexta (Tobacco hawkmoth), this protein is Transcription elongation factor 1 homolog.